The following is a 512-amino-acid chain: MKSKGSRLSTDCPVEFPKIVSGFAEEVKIRRQSSQGQYAVDSHPPKSPELKHRRQRSSSFVNGKCRNRDLPLLDNKKAQEINTNSHGQDIGIKNLPRQRELLNAKNGIDFTLMVAGQSGLGKTTFINSLFSTSLIDDDIKENKPIIRYKSIVEGDGTHLNFNVIDTPGFGNNMDNAFTWRTMVNYIDEEIRSYIFQEEQPDRTKMVDNRVHCCLYFLRPSNKGIDTLDVVTMKKLAKRVNLIPVIAKSDLLTKEELKNFKTQVREIIRVQDIPVCFFFGDEVLNATQDIFQKYPFSIIASNEYIFNEKGEKVKGRQYKWGAVDIENEKYCDFKILQKTIFDWNLIDLVESTEDYYEKCRSEMLRTRLLKARDCLTTKSVDITEEQRKFLEEEMNFDEIEENKLKNYKCYEIINKTVMDKVATEWDPEFITRQLEAKKKFNELSNREISKFRDWKKSLFMEQENFNQEIEQLNHKLENLQLECQDLEYKLLIGKSSNSHSTDSATLVNVHIKR.

Residues 31 to 68 are disordered; the sequence is RQSSQGQYAVDSHPPKSPELKHRRQRSSSFVNGKCRNR. Residues 106–365 enclose the Septin-type G domain; it reads NGIDFTLMVA…EKCRSEMLRT (260 aa). The tract at residues 116–123 is G1 motif; that stretch reads GQSGLGKT. Residues 116-123, G168, 247-255, and R315 contribute to the GTP site; these read GQSGLGKT and KSDLLTKEE. The interval 165 to 168 is G3 motif; sequence DTPG. A G4 motif region spans residues 246-249; sequence AKSD. Coiled-coil stretches lie at residues 376-406 and 451-496; these read TKSV…LKNY and RDWK…KSSN.

Belongs to the TRAFAC class TrmE-Era-EngA-EngB-Septin-like GTPase superfamily. Septin GTPase family. As to quaternary structure, interacts with other septin proteins such as SPR28 to form a ring at the bud neck.

It localises to the prospore membrane. It is found in the bud neck. Septins are GTPases involved in cytokinesis that assemble into filaments and form a ring at the cleavage site. May act by recruiting MYO1 and HOF1, a protein involved in septation, to the site of cleavage. Septins are also involved in cell morphogenesis, bud site selection, chitin deposition, cell cycle regulation, cell compartmentalization and spore wall formation. The polypeptide is Sporulation-regulated protein 3 (SPR3) (Saccharomyces cerevisiae (strain ATCC 204508 / S288c) (Baker's yeast)).